The following is a 405-amino-acid chain: Serpin I2 (405 aa).

An N-terminal signal peptide occupies residues 1–18 (MDTIFLWSLLLLFFGSQA). 3 N-linked (GlcNAc...) asparagine glycosylation sites follow: Asn-202, Asn-207, and Asn-306.

This sequence belongs to the serpin family. As to expression, expressed in pancreas and adipose tissues.

It localises to the secreted. In Homo sapiens (Human), this protein is Serpin I2 (SERPINI2).